Here is a 100-residue protein sequence, read N- to C-terminus: uncharacterized protein (100 aa).

Residues 62-82 (IPIVIIVSIFILLIIGSISLY) form a helical membrane-spanning segment.

The protein resides in the membrane. This is an uncharacterized protein from Dictyostelium discoideum (Social amoeba).